The following is a 256-amino-acid chain: Trans-aconitate 2-methyltransferase (256 aa).

It belongs to the methyltransferase superfamily. Tam family.

Its subcellular location is the cytoplasm. It catalyses the reaction trans-aconitate + S-adenosyl-L-methionine = (E)-3-(methoxycarbonyl)pent-2-enedioate + S-adenosyl-L-homocysteine. In terms of biological role, catalyzes the S-adenosylmethionine monomethyl esterification of trans-aconitate. The chain is Trans-aconitate 2-methyltransferase from Agrobacterium fabrum (strain C58 / ATCC 33970) (Agrobacterium tumefaciens (strain C58)).